We begin with the raw amino-acid sequence, 251 residues long: UPF0309 protein SAV_3856 (251 aa).

Positions 36–220 (IADTVADGGR…AGTLADRGIE (185 aa)) constitute an SIS domain.

Belongs to the UPF0309 family.

The chain is UPF0309 protein SAV_3856 from Streptomyces avermitilis (strain ATCC 31267 / DSM 46492 / JCM 5070 / NBRC 14893 / NCIMB 12804 / NRRL 8165 / MA-4680).